The primary structure comprises 282 residues: 3-oxoadipate CoA-transferase subunit A (282 aa).

The protein belongs to the 3-oxoacid CoA-transferase subunit A family. Heterotetramer composed of 2 A and 2 B subunits.

It catalyses the reaction 3-oxoadipate + succinyl-CoA = 3-oxoadipyl-CoA + succinate. The protein operates within aromatic compound metabolism; beta-ketoadipate pathway; acetyl-CoA and succinyl-CoA from 3-oxoadipate: step 1/2. In terms of biological role, catalyzes the CoA transfer from succinate to 3-oxoadipate (beta-ketoadipate). The protein is 3-oxoadipate CoA-transferase subunit A (catI) of Pseudomonas knackmussii (strain DSM 6978 / CCUG 54928 / LMG 23759 / B13).